A 396-amino-acid polypeptide reads, in one-letter code: S-adenosylmethionine synthase (396 aa).

An ATP-binding site is contributed by histidine 16. Aspartate 18 is a binding site for Mg(2+). Glutamate 44 lines the K(+) pocket. Glutamate 57 and glutamine 100 together coordinate L-methionine. A flexible loop region spans residues 100–110 (QSPDIAQGVDR). ATP-binding positions include 167-169 (DAK), 232-233 (RF), aspartate 241, 247-248 (RK), alanine 264, and lysine 268. An L-methionine-binding site is contributed by aspartate 241. L-methionine is bound at residue lysine 272.

It belongs to the AdoMet synthase family. Homotetramer; dimer of dimers. Mg(2+) serves as cofactor. Requires K(+) as cofactor.

Its subcellular location is the cytoplasm. The enzyme catalyses L-methionine + ATP + H2O = S-adenosyl-L-methionine + phosphate + diphosphate. Its pathway is amino-acid biosynthesis; S-adenosyl-L-methionine biosynthesis; S-adenosyl-L-methionine from L-methionine: step 1/1. Functionally, catalyzes the formation of S-adenosylmethionine (AdoMet) from methionine and ATP. The overall synthetic reaction is composed of two sequential steps, AdoMet formation and the subsequent tripolyphosphate hydrolysis which occurs prior to release of AdoMet from the enzyme. This is S-adenosylmethionine synthase from Ralstonia nicotianae (strain ATCC BAA-1114 / GMI1000) (Ralstonia solanacearum).